Reading from the N-terminus, the 270-residue chain is MRFIPLQTEQQVSCWAAQHIINRINDFKPTAERPFVLGLPTGGTPLKTYQELIRLYQAGKVSFKHVVTFNMDEYVALPEEHPESYHSFMYNNFFNHIDILPENINILNGNTDDHNAECHRYEEKIKSYGKIHLFMGGVGVDGHIAFNEPASSLSSRTRIKTLTQDTLIANSRFFNNDVTQVPKYALTIGVGTLLDAEEVMILATGHQKALAVQAAVEGSINHLWTVSALQMHRHFLLVCDEAAQQELKVKTVKYFTELEGAVAGTDYQGK.

Aspartate 72 functions as the Proton acceptor; for enolization step in the catalytic mechanism. The For ring-opening step role is filled by aspartate 141. The active-site Proton acceptor; for ring-opening step is the histidine 143. The active-site For ring-opening step is glutamate 148.

This sequence belongs to the glucosamine/galactosamine-6-phosphate isomerase family. NagB subfamily. In terms of assembly, homohexamer.

It catalyses the reaction alpha-D-glucosamine 6-phosphate + H2O = beta-D-fructose 6-phosphate + NH4(+). It functions in the pathway amino-sugar metabolism; N-acetylneuraminate degradation; D-fructose 6-phosphate from N-acetylneuraminate: step 5/5. With respect to regulation, allosterically activated by N-acetylglucosamine 6-phosphate (GlcNAc6P). In terms of biological role, catalyzes the reversible isomerization-deamination of glucosamine 6-phosphate (GlcN6P) to form fructose 6-phosphate (Fru6P) and ammonium ion. The polypeptide is Glucosamine-6-phosphate deaminase (Haemophilus influenzae (strain PittEE)).